Here is a 488-residue protein sequence, read N- to C-terminus: Inosine-5'-monophosphate dehydrogenase (488 aa).

CBS domains lie at 95-153 (VISN…SIKI) and 157-216 (MTKE…AKDE). NAD(+) contacts are provided by residues aspartate 250 and 300-302 (GIG). K(+) is bound by residues glycine 302 and glycine 304. An IMP-binding site is contributed by serine 305. Cysteine 307 is a K(+) binding site. Catalysis depends on cysteine 307, which acts as the Thioimidate intermediate. IMP is bound by residues 340-342 (DGG), 363-364 (GS), and 387-391 (YRGMG). Arginine 403 (proton acceptor) is an active-site residue. Residue glutamate 417 participates in IMP binding. The tract at residues 467 to 488 (AGLAESHPHDVQITKESPNYSF) is disordered. The K(+) site is built by glutamate 471, serine 472, and histidine 473.

It belongs to the IMPDH/GMPR family. As to quaternary structure, homotetramer. K(+) serves as cofactor.

The catalysed reaction is IMP + NAD(+) + H2O = XMP + NADH + H(+). It functions in the pathway purine metabolism; XMP biosynthesis via de novo pathway; XMP from IMP: step 1/1. Mycophenolic acid (MPA) is a non-competitive inhibitor that prevents formation of the closed enzyme conformation by binding to the same site as the amobile flap. In contrast, mizoribine monophosphate (MZP) is a competitive inhibitor that induces the closed conformation. MPA is a potent inhibitor of mammalian IMPDHs but a poor inhibitor of the bacterial enzymes. MZP is a more potent inhibitor of bacterial IMPDH. Catalyzes the conversion of inosine 5'-phosphate (IMP) to xanthosine 5'-phosphate (XMP), the first committed and rate-limiting step in the de novo synthesis of guanine nucleotides, and therefore plays an important role in the regulation of cell growth. The chain is Inosine-5'-monophosphate dehydrogenase from Staphylococcus saprophyticus subsp. saprophyticus (strain ATCC 15305 / DSM 20229 / NCIMB 8711 / NCTC 7292 / S-41).